The following is a 217-amino-acid chain: Ras-related protein RGP2 (217 aa).

Residues 19-26, 67-71, and 125-128 each bind GTP; these read GDSGVGKS, DTAGQ, and NKSD. 2 S-geranylgeranyl cysteine lipidation sites follow: cysteine 214 and cysteine 215.

Belongs to the small GTPase superfamily. Rab family.

Its subcellular location is the cell membrane. The polypeptide is Ras-related protein RGP2 (RGP2) (Oryza sativa subsp. japonica (Rice)).